The sequence spans 428 residues: tRNA(Ile)-lysidine synthase (428 aa).

Ser-28–Ser-33 contacts ATP.

This sequence belongs to the tRNA(Ile)-lysidine synthase family.

Its subcellular location is the cytoplasm. The enzyme catalyses cytidine(34) in tRNA(Ile2) + L-lysine + ATP = lysidine(34) in tRNA(Ile2) + AMP + diphosphate + H(+). In terms of biological role, ligates lysine onto the cytidine present at position 34 of the AUA codon-specific tRNA(Ile) that contains the anticodon CAU, in an ATP-dependent manner. Cytidine is converted to lysidine, thus changing the amino acid specificity of the tRNA from methionine to isoleucine. The chain is tRNA(Ile)-lysidine synthase from Streptococcus pyogenes serotype M1.